Reading from the N-terminus, the 583-residue chain is MVRLNLAVVALAAGALSASASASSSATPLRGLLTDAAKYQPTKDAQSQLRWKCLDGSKELSWSAVNDDYCDCPDGSDEPGTSACPNSSFYCHNTGHMPAYIRSSRVDDGICDPECCDGSDESDGKIRCPNRCEKVGKEYRKKLAELDNLRRAGAKVRDKYIAEGRKQKELLHAEIAKLEIEVQVATENEARFKAELTRAETSDKALIDAKVKTPLYTKLVDYQNAIRALHVKNAALKAELQTLTLLLDDLAKGYNPNYQDMAVKGAVVAYKEWRGIASAAAAATATGEVKEEGENNVDQIAGENTKLNELLDEGDWPWAKLSTLLSDDPLDLMDRGLGGALDDKRVYASETDGGLLFRIHEYLPDGIVPYFEAMVDTLLDVLMKANVITDVKRMRPKSSVGSESEPETVSVARRAHTDAAAHLSRTTHELSSLKQKLSEFSTRYGRSAEFKALENKCFSKDMGEYTYEYCFFGRATQIPNNGGAQISLGTFTNFNPKHDKSADEDAYWLQQIYARGQKCWNGPERSAIVDLECSTENKVLDVFEAEKCIYSIKVATPAVCFPPQQQQAQQTQQDGGHQVKDEL.

Positions 1–26 are cleaved as a signal peptide; that stretch reads MVRLNLAVVALAAGALSASASASSSA. Residues cysteine 91 and cysteine 115 are joined by a disulfide bond. Positions 130–252 form a coiled coil; it reads NRCEKVGKEY…LTLLLDDLAK (123 aa). The MRH domain occupies 455–562; it reads NKCFSKDMGE…KVATPAVCFP (108 aa). 3 cysteine pairs are disulfide-bonded: cysteine 457-cysteine 470, cysteine 519-cysteine 548, and cysteine 533-cysteine 560. The Prevents secretion from ER signature appears at 580–583; the sequence is KDEL.

Heterodimer of a catalytic subunit alpha and a subunit beta.

It is found in the endoplasmic reticulum. Functionally, subunit of glucosidase 2, which cleaves sequentially the 2 innermost alpha-1,3-linked glucose residues from the Glc(2)Man(9)GlcNAc(2) oligosaccharide precursor of immature glycoproteins in the endoplasmic reticulum (ER). Specifically required for the cleavage of the final glucose. The subunit beta retains the catalytic subunit alpha in the ER. The sequence is that of Glucosidase 2 subunit beta from Mycosarcoma maydis (Corn smut fungus).